Reading from the N-terminus, the 48-residue chain is DNA gyrase inhibitor YacG (48 aa).

Residues Cys9, Cys12, Cys28, and Cys32 each coordinate Zn(2+).

It belongs to the DNA gyrase inhibitor YacG family. In terms of assembly, interacts with GyrB. Zn(2+) is required as a cofactor.

In terms of biological role, inhibits all the catalytic activities of DNA gyrase by preventing its interaction with DNA. Acts by binding directly to the C-terminal domain of GyrB, which probably disrupts DNA binding by the gyrase. This chain is DNA gyrase inhibitor YacG, found in Wigglesworthia glossinidia brevipalpis.